We begin with the raw amino-acid sequence, 310 residues long: Ribosomal RNA small subunit methyltransferase H (310 aa).

S-adenosyl-L-methionine is bound by residues 35-37 (GGH), Asp-52, Phe-79, Asp-100, and Gln-107.

It belongs to the methyltransferase superfamily. RsmH family.

It localises to the cytoplasm. It catalyses the reaction cytidine(1402) in 16S rRNA + S-adenosyl-L-methionine = N(4)-methylcytidine(1402) in 16S rRNA + S-adenosyl-L-homocysteine + H(+). Specifically methylates the N4 position of cytidine in position 1402 (C1402) of 16S rRNA. This chain is Ribosomal RNA small subunit methyltransferase H, found in Anaeromyxobacter dehalogenans (strain 2CP-1 / ATCC BAA-258).